The following is a 361-amino-acid chain: Riboflavin biosynthesis protein RibD (361 aa).

The region spanning 1 to 122 (MEEYYMKLAL…MMKEAGIEVR (122 aa)) is the CMP/dCMP-type deaminase domain. Positions 1 to 144 (MEEYYMKLAL…EKFLHFMRTG (144 aa)) are deaminase. Position 49 (His49) interacts with Zn(2+). Residue Glu51 is the Proton donor of the active site. Zn(2+) is bound by residues Cys74 and Cys83. The tract at residues 145 to 361 (LPYVTLKAAA…IKLTAKPTKE (217 aa)) is reductase. NADP(+) is bound at residue Ala153. Ser167 contributes to the substrate binding site. NADP(+) is bound at residue Trp169. A substrate-binding site is contributed by Arg183. Positions 195 and 199 each coordinate NADP(+). The substrate site is built by Leu203 and Arg206. Residue Thr221 coordinates NADP(+). Glu290 is a binding site for substrate. 292–298 (GSAVHGS) contacts NADP(+).

In the N-terminal section; belongs to the cytidine and deoxycytidylate deaminase family. This sequence in the C-terminal section; belongs to the HTP reductase family. In terms of assembly, homotetramer. Zn(2+) is required as a cofactor.

The enzyme catalyses 2,5-diamino-6-hydroxy-4-(5-phosphoribosylamino)-pyrimidine + H2O + H(+) = 5-amino-6-(5-phospho-D-ribosylamino)uracil + NH4(+). It carries out the reaction 5-amino-6-(5-phospho-D-ribitylamino)uracil + NADP(+) = 5-amino-6-(5-phospho-D-ribosylamino)uracil + NADPH + H(+). It functions in the pathway cofactor biosynthesis; riboflavin biosynthesis; 5-amino-6-(D-ribitylamino)uracil from GTP: step 2/4. Its pathway is cofactor biosynthesis; riboflavin biosynthesis; 5-amino-6-(D-ribitylamino)uracil from GTP: step 3/4. In terms of biological role, converts 2,5-diamino-6-(ribosylamino)-4(3h)-pyrimidinone 5'-phosphate into 5-amino-6-(ribosylamino)-2,4(1h,3h)-pyrimidinedione 5'-phosphate. This chain is Riboflavin biosynthesis protein RibD (ribD), found in Bacillus subtilis (strain 168).